We begin with the raw amino-acid sequence, 233 residues long: Zinc import ATP-binding protein ZnuC (233 aa).

The ABC transporter domain occupies 6-222 (IEFRNVSKKF…SEFSNALSSL (217 aa)). An ATP-binding site is contributed by 38–45 (GPNGAGKT).

This sequence belongs to the ABC transporter superfamily. Zinc importer (TC 3.A.1.15.5) family. In terms of assembly, the complex is composed of two ATP-binding proteins (ZnuC), two transmembrane proteins (ZnuB) and a solute-binding protein (ZnuA).

The protein resides in the cell inner membrane. It catalyses the reaction Zn(2+)(out) + ATP(in) + H2O(in) = Zn(2+)(in) + ADP(in) + phosphate(in) + H(+)(in). In terms of biological role, part of the ABC transporter complex ZnuABC involved in zinc import. Responsible for energy coupling to the transport system. The sequence is that of Zinc import ATP-binding protein ZnuC from Rickettsia prowazekii (strain Madrid E).